The following is a 160-amino-acid chain: Putative pre-16S rRNA nuclease (160 aa).

It belongs to the YqgF nuclease family.

It localises to the cytoplasm. Could be a nuclease involved in processing of the 5'-end of pre-16S rRNA. The polypeptide is Putative pre-16S rRNA nuclease (Gluconobacter oxydans (strain 621H) (Gluconobacter suboxydans)).